We begin with the raw amino-acid sequence, 37 residues long: Tick defensin 2 (37 aa).

3 disulfides stabilise this stretch: cysteine 4/cysteine 26, cysteine 11/cysteine 34, and cysteine 15/cysteine 36.

This sequence belongs to the invertebrate defensin family.

Its subcellular location is the secreted. Functionally, antibacterial peptide mostly active against Gram-positive bacteria (MIC=0.24 ug/ml on Bacillus subtilis, and MIC=0.94 ug/ml on Micrococcus luteus, MIC&gt;120 ug/ml on both Escherichia coli and Pseudomonas aeruginosa). This Ornithodoros savignyi (African eyed tampan) protein is Tick defensin 2.